A 472-amino-acid chain; its full sequence is Protein translocase subunit SecD (472 aa).

Helical transmembrane passes span 7–27 (LLLLIVVLVIGASFVLVKLPL), 298–318 (LVAGFVGLVLVLVFMAVYYRL), 326–345 (SLMIYAVLTLAAFALVGVTL), 349–368 (GIAGFILSIGMAVDANVLIF), 392–414 (AFSSILDSNVTTLIACAALFWFG), and 432–452 (SLFTALTCSRTLLLVIVLSLP).

The protein belongs to the SecD/SecF family. SecD subfamily. Forms a complex with SecF. Part of the essential Sec protein translocation apparatus which comprises SecA, SecYEG and auxiliary proteins SecDF. Other proteins may also be involved.

It localises to the cell inner membrane. Functionally, part of the Sec protein translocase complex. Interacts with the SecYEG preprotein conducting channel. SecDF uses the proton motive force (PMF) to complete protein translocation after the ATP-dependent function of SecA. In terms of biological role, probably participates in protein translocation into and across both the cytoplasmic and thylakoid membranes in cyanobacterial cells. In Synechocystis sp. (strain ATCC 27184 / PCC 6803 / Kazusa), this protein is Protein translocase subunit SecD.